Here is a 582-residue protein sequence, read N- to C-terminus: MLHFLSSSSPLNPQFLLLPRQSARLRVLLSIPVSAMSSSSSSSSRGALAAAAVPSLSADEAGAAADEAFLRYTSPSMRRSGGGGVAIVWFRNDLRVLDNEAVVRAWAASDAVLPVYCVDPRISAGSTHYFGFPKTGALRAQFLIECLEDLKRNLTKQGLDLLIRHGKPEDILPSIAKAVTAHTVYAHKETCSEELLVEHLVRKGLEQVVIPQGGASNQKKPRNPKLQLIWGATLYHVDDLPFSVNNLPDVYTQFRKAVESKSSVRNCSKLPPSLGPPPGSGLDEIGGWGTVPTLESLGLSMTKAEKGMHFVGGESAALGRVHEYFWKKDQLKVYKETRNGMLGPDYSTKFSPWLASGSLSPRYICEEVKRYEKQRIANDSTYWVLFELIWRDYFRFISAKYGNSIFHLGGPRNVESKWSQDQALFESWRDGRTGYPLIDANMKELLATGFMSNRGRQIVCSFLVRDMGIDWRMGAEWFETCLLDYDPASNYGNWTYGAGVGNDPREDRYFSIPKQAKTYDPDGEYVAYWLPELRSIAKERRNFPGASYIKQVVPLKFDGGHQKRDQQFNRQRRPGHMYRRQK.

The N-terminal 49 residues, Met1 to Ala49, are a transit peptide targeting the chloroplast and mitochondrion. Positions Gly84–Leu234 constitute a Photolyase/cryptochrome alpha/beta domain. The segment at Gly560–Lys582 is disordered. Residues Arg570–Lys582 show a composition bias toward basic residues.

The protein belongs to the DNA photolyase class-1 family. It depends on FAD as a cofactor. Requires (6R)-5,10-methylene-5,6,7,8-tetrahydrofolate as cofactor.

It is found in the plastid. The protein localises to the chloroplast. Its subcellular location is the mitochondrion. In terms of biological role, may have a photoreceptor function. Binds ss- and ds-DNA in a sequence non-specific manner, lacks photolyase activity. This Oryza sativa subsp. japonica (Rice) protein is Cryptochrome DASH, chloroplastic/mitochondrial (CRYD).